The chain runs to 385 residues: U6 small nuclear RNA (adenine-(43)-N(6))-methyltransferase (385 aa).

S-adenosyl-L-methionine contacts are provided by Arg54, Gly83, Glu106, and Asn155.

The protein belongs to the methyltransferase superfamily. METTL16/RlmF family.

It is found in the cytoplasm. Its subcellular location is the nucleus. The enzyme catalyses adenosine in U6 snRNA + S-adenosyl-L-methionine = N(6)-methyladenosine in U6 snRNA + S-adenosyl-L-homocysteine + H(+). Functionally, RNA N6-methyltransferase that mediates N6-methylation of adenine of U6 small nuclear RNA (U6 snRNA). The sequence is that of U6 small nuclear RNA (adenine-(43)-N(6))-methyltransferase from Schizosaccharomyces pombe (strain 972 / ATCC 24843) (Fission yeast).